A 333-amino-acid polypeptide reads, in one-letter code: Bifunctional phosphoglucose/phosphomannose isomerase (333 aa).

The SIS domain maps to 22-160; the sequence is LEGALEGVEE…SGALGVDLEA (139 aa). Positions 39, 40, 84, 86, 89, and 136 each coordinate D-fructose 6-phosphate. The active-site Proton acceptor is Glu211. D-fructose 6-phosphate contacts are provided by His227 and Lys322. The active-site Proton donor is His227. The Proton acceptor role is filled by Lys322.

This sequence belongs to the PGI/PMI family. As to quaternary structure, homodimer.

The catalysed reaction is alpha-D-glucose 6-phosphate = beta-D-fructose 6-phosphate. It carries out the reaction D-mannose 6-phosphate = D-fructose 6-phosphate. Inhibited by low concentrations of erythrose 4-phosphate and 6-phosphogluconate. Dual specificity isomerase that catalyzes the isomerization of both glucose-6-phosphate and mannose-6-phosphate to fructose-6-phosphate with similar catalytic efficiency. In Aeropyrum pernix (strain ATCC 700893 / DSM 11879 / JCM 9820 / NBRC 100138 / K1), this protein is Bifunctional phosphoglucose/phosphomannose isomerase.